The chain runs to 185 residues: Protein GrpE (185 aa).

Positions 1-37 (MSEEKQTPEQEAEVEAQEEAVQADTEEVTQDEQSAFQ) are disordered.

The protein belongs to the GrpE family. As to quaternary structure, homodimer.

The protein localises to the cytoplasm. Participates actively in the response to hyperosmotic and heat shock by preventing the aggregation of stress-denatured proteins, in association with DnaK and GrpE. It is the nucleotide exchange factor for DnaK and may function as a thermosensor. Unfolded proteins bind initially to DnaJ; upon interaction with the DnaJ-bound protein, DnaK hydrolyzes its bound ATP, resulting in the formation of a stable complex. GrpE releases ADP from DnaK; ATP binding to DnaK triggers the release of the substrate protein, thus completing the reaction cycle. Several rounds of ATP-dependent interactions between DnaJ, DnaK and GrpE are required for fully efficient folding. The chain is Protein GrpE from Bacillus pumilus (strain SAFR-032).